A 289-amino-acid chain; its full sequence is Phosphatidylserine decarboxylase proenzyme (289 aa).

Active-site charge relay system; for autoendoproteolytic cleavage activity residues include Asp-89, His-146, and Ser-252. Residue Ser-252 is the Schiff-base intermediate with substrate; via pyruvic acid; for decarboxylase activity of the active site. Ser-252 carries the post-translational modification Pyruvic acid (Ser); by autocatalysis.

This sequence belongs to the phosphatidylserine decarboxylase family. PSD-B subfamily. Prokaryotic type I sub-subfamily. Heterodimer of a large membrane-associated beta subunit and a small pyruvoyl-containing alpha subunit. The cofactor is pyruvate. In terms of processing, is synthesized initially as an inactive proenzyme. Formation of the active enzyme involves a self-maturation process in which the active site pyruvoyl group is generated from an internal serine residue via an autocatalytic post-translational modification. Two non-identical subunits are generated from the proenzyme in this reaction, and the pyruvate is formed at the N-terminus of the alpha chain, which is derived from the carboxyl end of the proenzyme. The autoendoproteolytic cleavage occurs by a canonical serine protease mechanism, in which the side chain hydroxyl group of the serine supplies its oxygen atom to form the C-terminus of the beta chain, while the remainder of the serine residue undergoes an oxidative deamination to produce ammonia and the pyruvoyl prosthetic group on the alpha chain. During this reaction, the Ser that is part of the protease active site of the proenzyme becomes the pyruvoyl prosthetic group, which constitutes an essential element of the active site of the mature decarboxylase.

It localises to the cell membrane. The catalysed reaction is a 1,2-diacyl-sn-glycero-3-phospho-L-serine + H(+) = a 1,2-diacyl-sn-glycero-3-phosphoethanolamine + CO2. Its pathway is phospholipid metabolism; phosphatidylethanolamine biosynthesis; phosphatidylethanolamine from CDP-diacylglycerol: step 2/2. In terms of biological role, catalyzes the formation of phosphatidylethanolamine (PtdEtn) from phosphatidylserine (PtdSer). The chain is Phosphatidylserine decarboxylase proenzyme from Shewanella denitrificans (strain OS217 / ATCC BAA-1090 / DSM 15013).